A 340-amino-acid polypeptide reads, in one-letter code: NADH-quinone oxidoreductase subunit H (340 aa).

8 helical membrane-spanning segments follow: residues 4–24 (TIGI…PLLI), 78–98 (YLFV…WAVI), 113–133 (VLYL…AGWA), 151–171 (VSYE…AGSM), 184–204 (MLHW…ISGI), 244–264 (SMIL…LSPF), 273–293 (IFFI…FLFV), and 316–336 (VLIP…VAHV).

Belongs to the complex I subunit 1 family. In terms of assembly, NDH-1 is composed of 14 different subunits. Subunits NuoA, H, J, K, L, M, N constitute the membrane sector of the complex.

The protein resides in the cell inner membrane. It catalyses the reaction a quinone + NADH + 5 H(+)(in) = a quinol + NAD(+) + 4 H(+)(out). In terms of biological role, NDH-1 shuttles electrons from NADH, via FMN and iron-sulfur (Fe-S) centers, to quinones in the respiratory chain. The immediate electron acceptor for the enzyme in this species is believed to be ubiquinone. Couples the redox reaction to proton translocation (for every two electrons transferred, four hydrogen ions are translocated across the cytoplasmic membrane), and thus conserves the redox energy in a proton gradient. This subunit may bind ubiquinone. The chain is NADH-quinone oxidoreductase subunit H from Legionella pneumophila subsp. pneumophila (strain Philadelphia 1 / ATCC 33152 / DSM 7513).